Consider the following 567-residue polypeptide: Septation ring formation regulator EzrA (567 aa).

The Extracellular portion of the chain corresponds to 1–2 (ME). A helical transmembrane segment spans residues 3-21 (IAVIVLLLLGGVMIYNHVY). Over 22–567 (RKKMYSEIDR…IFRDERSKEE (546 aa)) the chain is Cytoplasmic. Coiled-coil stretches lie at residues 97–188 (RYAK…LTAS) and 254–465 (REIV…LEEK).

This sequence belongs to the EzrA family.

The protein localises to the cell membrane. Functionally, negative regulator of FtsZ ring formation; modulates the frequency and position of FtsZ ring formation. Inhibits FtsZ ring formation at polar sites. Interacts either with FtsZ or with one of its binding partners to promote depolymerization. The chain is Septation ring formation regulator EzrA from Geobacillus sp. (strain WCH70).